Reading from the N-terminus, the 205-residue chain is Proteasome subunit beta type-3 (205 aa).

Serine 2 carries the post-translational modification N-acetylserine. Lysine 77 bears the N6-acetyllysine mark.

It belongs to the peptidase T1B family. In terms of assembly, the 26S proteasome consists of a 20S proteasome core and two 19S regulatory subunits. The 20S proteasome core is a barrel-shaped complex made of 28 subunits that are arranged in four stacked rings. The two outer rings are each formed by seven alpha subunits, and the two inner rings are formed by seven beta subunits. The proteolytic activity is exerted by three beta-subunits PSMB5, PSMB6 and PSMB7.

It localises to the cytoplasm. The protein resides in the nucleus. Functionally, non-catalytic component of the 20S core proteasome complex involved in the proteolytic degradation of most intracellular proteins. This complex plays numerous essential roles within the cell by associating with different regulatory particles. Associated with two 19S regulatory particles, forms the 26S proteasome and thus participates in the ATP-dependent degradation of ubiquitinated proteins. The 26S proteasome plays a key role in the maintenance of protein homeostasis by removing misfolded or damaged proteins that could impair cellular functions, and by removing proteins whose functions are no longer required. Associated with the PA200 or PA28, the 20S proteasome mediates ubiquitin-independent protein degradation. This type of proteolysis is required in several pathways including spermatogenesis (20S-PA200 complex) or generation of a subset of MHC class I-presented antigenic peptides (20S-PA28 complex). In Bos taurus (Bovine), this protein is Proteasome subunit beta type-3 (PSMB3).